A 258-amino-acid polypeptide reads, in one-letter code: Acetylglutamate kinase (258 aa).

Substrate is bound by residues 44-45, Arg-66, and Asn-158; that span reads GG. ATP contacts are provided by residues 181–186 and 209–211; these read DVSGIL and IIT.

It belongs to the acetylglutamate kinase family. ArgB subfamily. Homodimer.

The protein localises to the cytoplasm. It carries out the reaction N-acetyl-L-glutamate + ATP = N-acetyl-L-glutamyl 5-phosphate + ADP. Its pathway is amino-acid biosynthesis; L-arginine biosynthesis; N(2)-acetyl-L-ornithine from L-glutamate: step 2/4. In terms of biological role, catalyzes the ATP-dependent phosphorylation of N-acetyl-L-glutamate. The polypeptide is Acetylglutamate kinase (Citrobacter koseri (strain ATCC BAA-895 / CDC 4225-83 / SGSC4696)).